Reading from the N-terminus, the 242-residue chain is uncharacterized protein (242 aa).

Residues 1 to 12 show a composition bias toward basic and acidic residues; sequence MKLRRERFERRN. The tract at residues 1–21 is disordered; it reads MKLRRERFERRNGSGKNSQSS. Residues 1 to 23 lie on the Cytoplasmic side of the membrane; that stretch reads MKLRRERFERRNGSGKNSQSSSS. Residues 24–44 form a helical membrane-spanning segment; the sequence is WMVTFTDLITLILVFFILLFS. The Extracellular portion of the chain corresponds to 45–242; the sequence is MSQIDLQKFK…VIKKSKTTSS (198 aa). The interval 64–91 is disordered; that stretch reads GNGLQPDQTSIEKKNTSPSDTKKQEDQQ. A compositionally biased stretch (basic and acidic residues) spans 73–89; that stretch reads SIEKKNTSPSDTKKQED. The region spanning 117-238 is the OmpA-like domain; that stretch reads ERGVVLVLQE…RVEIVIKKSK (122 aa).

This sequence belongs to the MotB family.

It is found in the cell membrane. Its function is as follows. May be involved in some transport function. This is an uncharacterized protein from Bacillus subtilis (strain 168).